The chain runs to 231 residues: Large ribosomal subunit protein uL1 (231 aa).

This sequence belongs to the universal ribosomal protein uL1 family. Part of the 50S ribosomal subunit.

In terms of biological role, binds directly to 23S rRNA. The L1 stalk is quite mobile in the ribosome, and is involved in E site tRNA release. Functionally, protein L1 is also a translational repressor protein, it controls the translation of the L11 operon by binding to its mRNA. The chain is Large ribosomal subunit protein uL1 from Pseudomonas aeruginosa (strain LESB58).